The primary structure comprises 294 residues: MNSGVVTIIGRPSAGKSTFLNTASGEKVSIVSAIPQTTRNAIRGIVNTTKGQIVFIDTPGYHKSEKKLNLKLQEIAKTRLEEGDAVLYLIDLSREFGEEEKNICSLLIPLQNKTVIGLNKADLKSSKADLVKKELLSLLPDIPQERIFEISALKDEGINEILSLLIELLPEGEALYPEDIYTDQDVVFRITEIIREQAILHTREEIPHALYAGVEDAEMHKNGKELWVRAFLYVEKESQKAMLIGKGAAVIKSIRIKSMAELRKIFPYKVQLDLQVRVNKNWRQKDNIIKKISY.

The Era-type G domain occupies asparagine 2–glutamate 171. The G1 stretch occupies residues glycine 10–serine 17. Glycine 10 to serine 17 lines the GTP pocket. The G2 stretch occupies residues glutamine 36 to asparagine 40. Residues aspartate 57–glycine 60 are G3. GTP is bound by residues aspartate 57 to tyrosine 61 and asparagine 119 to aspartate 122. Positions asparagine 119–aspartate 122 are G4. Positions isoleucine 150 to alanine 152 are G5. The KH type-2 domain maps to threonine 202–lysine 280.

It belongs to the TRAFAC class TrmE-Era-EngA-EngB-Septin-like GTPase superfamily. Era GTPase family. Monomer.

It is found in the cytoplasm. The protein localises to the cell inner membrane. In terms of biological role, an essential GTPase that binds both GDP and GTP, with rapid nucleotide exchange. Plays a role in 16S rRNA processing and 30S ribosomal subunit biogenesis and possibly also in cell cycle regulation and energy metabolism. The chain is GTPase Era from Treponema denticola (strain ATCC 35405 / DSM 14222 / CIP 103919 / JCM 8153 / KCTC 15104).